Consider the following 147-residue polypeptide: Endoribonuclease YbeY (147 aa).

The Zn(2+) site is built by histidine 109, histidine 113, and histidine 119.

Belongs to the endoribonuclease YbeY family. The cofactor is Zn(2+).

The protein localises to the cytoplasm. Its function is as follows. Single strand-specific metallo-endoribonuclease involved in late-stage 70S ribosome quality control and in maturation of the 3' terminus of the 16S rRNA. This chain is Endoribonuclease YbeY, found in Magnetococcus marinus (strain ATCC BAA-1437 / JCM 17883 / MC-1).